Here is a 475-residue protein sequence, read N- to C-terminus: Ribulose bisphosphate carboxylase large chain (475 aa).

Positions 1–2 are excised as a propeptide; it reads MS. At Pro-3 the chain carries N-acetylproline. Residue Lys-14 is modified to N6,N6,N6-trimethyllysine. Substrate is bound by residues Asn-123 and Thr-173. Lys-175 functions as the Proton acceptor in the catalytic mechanism. Substrate is bound at residue Lys-177. Residues Lys-201, Asp-203, and Glu-204 each coordinate Mg(2+). Position 201 is an N6-carboxylysine (Lys-201). The active-site Proton acceptor is His-294. Substrate is bound by residues Arg-295, His-327, and Ser-379.

The protein belongs to the RuBisCO large chain family. Type I subfamily. In terms of assembly, heterohexadecamer of 8 large chains and 8 small chains; disulfide-linked. The disulfide link is formed within the large subunit homodimers. Mg(2+) is required as a cofactor. The disulfide bond which can form in the large chain dimeric partners within the hexadecamer appears to be associated with oxidative stress and protein turnover.

The protein localises to the plastid. Its subcellular location is the chloroplast. The catalysed reaction is 2 (2R)-3-phosphoglycerate + 2 H(+) = D-ribulose 1,5-bisphosphate + CO2 + H2O. It catalyses the reaction D-ribulose 1,5-bisphosphate + O2 = 2-phosphoglycolate + (2R)-3-phosphoglycerate + 2 H(+). In terms of biological role, ruBisCO catalyzes two reactions: the carboxylation of D-ribulose 1,5-bisphosphate, the primary event in carbon dioxide fixation, as well as the oxidative fragmentation of the pentose substrate in the photorespiration process. Both reactions occur simultaneously and in competition at the same active site. This chain is Ribulose bisphosphate carboxylase large chain, found in Angiopteris evecta (Mule's foot fern).